The chain runs to 285 residues: MTAQNIDGKLISQTVRSEVAARVKARTQAGLRAPGLAVVLVGEDPASQVYVGSKRKACEEVGFVSKSYDLPATATEDELLTLVDQLNEDPEIDGILVQLPLPAGIDSTQVLERITPEKDVDGFHPYNVGRLAQRMPKLRSCTPKGIITLLDRYNIDLRGKHAVVVGASNIVGRPMTLELLLAGCTTTTCHRFTKDLEGHVRQADVVVVAVGKPNFIPGAWIKKGAVVVDVGINRLESGKLVGDVEYDVAKESASFITPVPGGVGPMTVASLIENTMIACEQFHSK.

NADP(+) contacts are provided by residues Gly-166–Ser-168 and Ile-232.

This sequence belongs to the tetrahydrofolate dehydrogenase/cyclohydrolase family. In terms of assembly, homodimer.

It catalyses the reaction (6R)-5,10-methylene-5,6,7,8-tetrahydrofolate + NADP(+) = (6R)-5,10-methenyltetrahydrofolate + NADPH. The catalysed reaction is (6R)-5,10-methenyltetrahydrofolate + H2O = (6R)-10-formyltetrahydrofolate + H(+). Its pathway is one-carbon metabolism; tetrahydrofolate interconversion. In terms of biological role, catalyzes the oxidation of 5,10-methylenetetrahydrofolate to 5,10-methenyltetrahydrofolate and then the hydrolysis of 5,10-methenyltetrahydrofolate to 10-formyltetrahydrofolate. The chain is Bifunctional protein FolD from Vibrio atlanticus (strain LGP32) (Vibrio splendidus (strain Mel32)).